The chain runs to 344 residues: Pyruvate dehydrogenase E1 component subunit alpha (344 aa).

His-55, Tyr-81, Arg-82, Ala-130, Ile-132, Asp-168, Gly-169, and Asn-197 together coordinate pyruvate. Tyr-81, Arg-82, Ala-130, Ile-132, Asp-168, Gly-169, Asn-197, and His-266 together coordinate thiamine diphosphate. Asp-168 provides a ligand contact to Mg(2+). Residue Asn-197 participates in Mg(2+) binding.

In terms of assembly, heterodimer of an alpha and a beta chain. The cofactor is thiamine diphosphate. Mg(2+) serves as cofactor.

It localises to the plastid. The protein resides in the chloroplast. The enzyme catalyses N(6)-[(R)-lipoyl]-L-lysyl-[protein] + pyruvate + H(+) = N(6)-[(R)-S(8)-acetyldihydrolipoyl]-L-lysyl-[protein] + CO2. Its function is as follows. The pyruvate dehydrogenase complex catalyzes the overall conversion of pyruvate to acetyl-CoA and CO(2). It contains multiple copies of three enzymatic components: pyruvate dehydrogenase (E1), dihydrolipoamide acetyltransferase (E2) and lipoamide dehydrogenase (E3). The chain is Pyruvate dehydrogenase E1 component subunit alpha (pdhA) from Porphyra purpurea (Red seaweed).